The primary structure comprises 794 residues: LPS-assembly protein LptD (794 aa).

The first 31 residues, 1 to 31, serve as a signal peptide directing secretion; the sequence is MPSHCSSLLCARFRLSSLAVIVALAASGVRA.

Belongs to the LptD family. Component of the lipopolysaccharide transport and assembly complex. Interacts with LptE and LptA.

The protein resides in the cell outer membrane. Its function is as follows. Together with LptE, is involved in the assembly of lipopolysaccharide (LPS) at the surface of the outer membrane. This Marinobacter nauticus (strain ATCC 700491 / DSM 11845 / VT8) (Marinobacter aquaeolei) protein is LPS-assembly protein LptD.